Here is a 296-residue protein sequence, read N- to C-terminus: Cyclin-dependent kinase 1 (296 aa).

A Protein kinase domain is found at 10-288 (YQKLEKLGEG…AKEALLHPYF (279 aa)). ATP-binding positions include 16 to 24 (LGEGTYGKV) and Lys-39. Thr-20 bears the Phosphothreonine mark. Tyr-21 carries the phosphotyrosine modification. The Proton acceptor role is filled by Asp-129. Thr-162 carries the phosphothreonine; by CAK modification.

Belongs to the protein kinase superfamily. CMGC Ser/Thr protein kinase family. CDC2/CDKX subfamily. In terms of assembly, forms a stable but non-covalent complex with a regulatory subunit and with a cyclin.

The catalysed reaction is L-seryl-[protein] + ATP = O-phospho-L-seryl-[protein] + ADP + H(+). The enzyme catalyses L-threonyl-[protein] + ATP = O-phospho-L-threonyl-[protein] + ADP + H(+). It catalyses the reaction [DNA-directed RNA polymerase] + ATP = phospho-[DNA-directed RNA polymerase] + ADP + H(+). Its activity is regulated as follows. Phosphorylation at Thr-20 or Tyr-21 inactivates the enzyme, while phosphorylation at Thr-162 activates it. Its function is as follows. Plays a key role in the control of the eukaryotic cell cycle. Required for entry into S-phase and mitosis. p34 is a component of the kinase complex that phosphorylates the repetitive C-terminus of RNA polymerase II. This Dictyostelium discoideum (Social amoeba) protein is Cyclin-dependent kinase 1 (cdk1).